Consider the following 121-residue polypeptide: MAGARRTMALVALVAVVAAAVVAERASAAVSCGDVTSSIAPCLSYVMGRESSPSSSCCSGVRTLNGKASSSADRRTACSCLKNMASSFRNLNMGNAASIPSKCGVSVAFPISTSVDCSKIN.

A signal peptide spans 1 to 28; the sequence is MAGARRTMALVALVAVVAAAVVAERASA. Cystine bridges form between Cys-32–Cys-80, Cys-42–Cys-57, Cys-58–Cys-103, and Cys-78–Cys-117.

It belongs to the plant LTP family.

In terms of biological role, plant non-specific lipid-transfer proteins transfer phospholipids as well as galactolipids across membranes. May play a role in wax or cutin deposition in the cell walls of expanding epidermal cells and certain secretory tissues. May possess an antifungal activity and protect the plant against pathogens. The sequence is that of Non-specific lipid-transfer protein 3 (LTP110-A) from Oryza sativa subsp. indica (Rice).